The chain runs to 262 residues: UDP-2,3-diacylglucosamine hydrolase (262 aa).

Positions 10, 12, 47, 86, 121, 218, and 220 each coordinate Mn(2+).

The protein belongs to the LpxH family. Mn(2+) is required as a cofactor.

Its subcellular location is the cell inner membrane. It is found in the cytoplasm. The catalysed reaction is UDP-2-N,3-O-bis[(3R)-3-hydroxytetradecanoyl]-alpha-D-glucosamine + H2O = 2-N,3-O-bis[(3R)-3-hydroxytetradecanoyl]-alpha-D-glucosaminyl 1-phosphate + UMP + 2 H(+). Its pathway is glycolipid biosynthesis; lipid IV(A) biosynthesis; lipid IV(A) from (3R)-3-hydroxytetradecanoyl-[acyl-carrier-protein] and UDP-N-acetyl-alpha-D-glucosamine: step 4/6. Its function is as follows. Hydrolyzes the pyrophosphate bond of UDP-2,3-diacylglucosamine to yield 2,3-diacylglucosamine 1-phosphate (lipid X) and UMP by catalyzing the attack of water at the alpha-P atom. Involved in the biosynthesis of lipid A, a phosphorylated glycolipid that anchors the lipopolysaccharide to the outer membrane of the cell. The sequence is that of UDP-2,3-diacylglucosamine hydrolase from Porphyromonas gingivalis (strain ATCC BAA-308 / W83).